Reading from the N-terminus, the 256-residue chain is Cysteine-rich repeat secretory protein 42 (256 aa).

The N-terminal stretch at 1-26 is a signal peptide; it reads MSSVFGSVHILAMIAIQLLLTHSVSS. Gnk2-homologous domains lie at 33–136 and 142–253; these read YLHH…SVAS and YEND…LYPF.

Belongs to the cysteine-rich repeat secretory protein family.

It is found in the secreted. The polypeptide is Cysteine-rich repeat secretory protein 42 (CRRSP42) (Arabidopsis thaliana (Mouse-ear cress)).